The primary structure comprises 230 residues: UPF0758 protein Glov_0523 (230 aa).

Positions 108-230 (RFTSPAQVFD…YFSFVESGLL (123 aa)) constitute an MPN domain. Zn(2+) is bound by residues His-179, His-181, and Asp-192. Residues 179–192 (HNHPSGDPAPSRED) carry the JAMM motif motif.

This sequence belongs to the UPF0758 family.

The chain is UPF0758 protein Glov_0523 from Trichlorobacter lovleyi (strain ATCC BAA-1151 / DSM 17278 / SZ) (Geobacter lovleyi).